The following is a 206-amino-acid chain: FMN-dependent NADH:quinone oxidoreductase (206 aa).

FMN contacts are provided by residues 15 to 17 (SVS), 94 to 97 (MYNF), and 138 to 141 (TRGG).

The protein belongs to the azoreductase type 1 family. As to quaternary structure, homodimer. Requires FMN as cofactor.

The enzyme catalyses 2 a quinone + NADH + H(+) = 2 a 1,4-benzosemiquinone + NAD(+). The catalysed reaction is N,N-dimethyl-1,4-phenylenediamine + anthranilate + 2 NAD(+) = 2-(4-dimethylaminophenyl)diazenylbenzoate + 2 NADH + 2 H(+). Quinone reductase that provides resistance to thiol-specific stress caused by electrophilic quinones. In terms of biological role, also exhibits azoreductase activity. Catalyzes the reductive cleavage of the azo bond in aromatic azo compounds to the corresponding amines. This Rhizobium meliloti (strain 1021) (Ensifer meliloti) protein is FMN-dependent NADH:quinone oxidoreductase.